A 670-amino-acid chain; its full sequence is Methionine--tRNA ligase (670 aa).

The short motif at 14–24 is the 'HIGH' region element; sequence PYANGHLHLGH. 4 residues coordinate Zn(2+): Cys-145, Cys-148, Cys-158, and Cys-161. The 'KMSKS' region signature appears at 330–334; sequence KMSKS. Lys-333 is a binding site for ATP. In terms of domain architecture, tRNA-binding spans 570–670; sequence DFAKVDLRIA…AGALPGMKVK (101 aa).

The protein belongs to the class-I aminoacyl-tRNA synthetase family. MetG type 1 subfamily. Homodimer. Zn(2+) is required as a cofactor.

It is found in the cytoplasm. It carries out the reaction tRNA(Met) + L-methionine + ATP = L-methionyl-tRNA(Met) + AMP + diphosphate. Its function is as follows. Is required not only for elongation of protein synthesis but also for the initiation of all mRNA translation through initiator tRNA(fMet) aminoacylation. This Legionella pneumophila (strain Paris) protein is Methionine--tRNA ligase.